Reading from the N-terminus, the 210-residue chain is MTQGSRLYFAVAVLMCGFVSINGVGLNDLLERASQLSDKLHSLSTSLTNDLDSHFPPVGRVMMPRPSMCHTSSLQIPNDKDQALKVPEDELLSLARSLLLAWSDPLALLSSEASSLAHPERNTIDSKTKELQDNINSLGAGLEHVFNKMDSTSDNLSSLPFDINSLGQDKTSRLVNFHFLLSCFRRDSHKIDSFLKVLRCRAAKKRPEMC.

A signal peptide spans 1–23 (MTQGSRLYFAVAVLMCGFVSING). 2 disulfides stabilise this stretch: cysteine 69-cysteine 183 and cysteine 200-cysteine 210.

This sequence belongs to the somatotropin/prolactin family. Pituitary gland.

Its subcellular location is the secreted. The chain is Prolactin (prl1) from Carassius auratus (Goldfish).